The sequence spans 463 residues: Argininosuccinate lyase (463 aa).

The protein belongs to the lyase 1 family. Argininosuccinate lyase subfamily.

Its subcellular location is the cytoplasm. It carries out the reaction 2-(N(omega)-L-arginino)succinate = fumarate + L-arginine. It participates in amino-acid biosynthesis; L-arginine biosynthesis; L-arginine from L-ornithine and carbamoyl phosphate: step 3/3. The polypeptide is Argininosuccinate lyase (Prochlorococcus marinus (strain NATL1A)).